The primary structure comprises 64 residues: Small ribosomal subunit protein bS21 (64 aa).

The protein belongs to the bacterial ribosomal protein bS21 family.

This Anaeromyxobacter dehalogenans (strain 2CP-1 / ATCC BAA-258) protein is Small ribosomal subunit protein bS21.